The following is a 335-amino-acid chain: tRNA N6-adenosine threonylcarbamoyltransferase (335 aa).

Histidine 111 and histidine 115 together coordinate Fe cation. Residues 133-137 (IISGG), aspartate 166, glycine 179, aspartate 183, and asparagine 268 each bind substrate. Residue aspartate 296 participates in Fe cation binding.

Belongs to the KAE1 / TsaD family. It depends on Fe(2+) as a cofactor.

Its subcellular location is the cytoplasm. The catalysed reaction is L-threonylcarbamoyladenylate + adenosine(37) in tRNA = N(6)-L-threonylcarbamoyladenosine(37) in tRNA + AMP + H(+). Functionally, required for the formation of a threonylcarbamoyl group on adenosine at position 37 (t(6)A37) in tRNAs that read codons beginning with adenine. Is involved in the transfer of the threonylcarbamoyl moiety of threonylcarbamoyl-AMP (TC-AMP) to the N6 group of A37, together with TsaE and TsaB. TsaD likely plays a direct catalytic role in this reaction. The protein is tRNA N6-adenosine threonylcarbamoyltransferase of Aquifex aeolicus (strain VF5).